A 1097-amino-acid chain; its full sequence is RecBCD enzyme subunit RecC (1097 aa).

This sequence belongs to the RecC family. As to quaternary structure, heterotrimer of RecB, RecC and RecD. All subunits contribute to DNA-binding.

A helicase/nuclease that prepares dsDNA breaks (DSB) for recombinational DNA repair. Binds to DSBs and unwinds DNA via a highly rapid and processive ATP-dependent bidirectional helicase activity. Holoenzyme degrades any linearized DNA that is unable to undergo homologous recombination. In the holoenzyme this subunit recognizes the wild-type Chi sequence, and when added to isolated RecB increases its ATP-dependent helicase processivity. Unlike the case in E.coli, suppresses RecA-dependent homologous recombination, is instead required for single-strand annealing pathway repair of DSB. The protein is RecBCD enzyme subunit RecC of Mycobacterium tuberculosis (strain CDC 1551 / Oshkosh).